A 450-amino-acid chain; its full sequence is Phosphoglucosamine mutase (450 aa).

Serine 102 acts as the Phosphoserine intermediate in catalysis. Mg(2+) is bound by residues serine 102, aspartate 243, aspartate 245, and aspartate 247. Serine 102 carries the post-translational modification Phosphoserine.

It belongs to the phosphohexose mutase family. Requires Mg(2+) as cofactor. In terms of processing, activated by phosphorylation.

The enzyme catalyses alpha-D-glucosamine 1-phosphate = D-glucosamine 6-phosphate. In terms of biological role, catalyzes the conversion of glucosamine-6-phosphate to glucosamine-1-phosphate. This is Phosphoglucosamine mutase from Rhizobium leguminosarum bv. trifolii (strain WSM2304).